Here is a 158-residue protein sequence, read N- to C-terminus: UPF0225 protein PSEEN1229 (158 aa).

This sequence belongs to the UPF0225 family.

The polypeptide is UPF0225 protein PSEEN1229 (Pseudomonas entomophila (strain L48)).